Consider the following 130-residue polypeptide: DNA-directed RNA polymerase subunit omega (130 aa).

Residues 80-130 (PEPDTVPLIGSAGASVDADDTEVAPERMTEEELLKGLEGLAPPEEQPEEDE) form a disordered region. Positions 103 to 114 (APERMTEEELLK) are enriched in basic and acidic residues.

This sequence belongs to the RNA polymerase subunit omega family. In terms of assembly, the RNAP catalytic core consists of 2 alpha, 1 beta, 1 beta' and 1 omega subunit. When a sigma factor is associated with the core the holoenzyme is formed, which can initiate transcription.

It carries out the reaction RNA(n) + a ribonucleoside 5'-triphosphate = RNA(n+1) + diphosphate. In terms of biological role, promotes RNA polymerase assembly. Latches the N- and C-terminal regions of the beta' subunit thereby facilitating its interaction with the beta and alpha subunits. The protein is DNA-directed RNA polymerase subunit omega of Rhodopseudomonas palustris (strain BisB18).